Here is an 86-residue protein sequence, read N- to C-terminus: Exodeoxyribonuclease 7 small subunit (86 aa).

Residues 67–86 form a disordered region; the sequence is LSDPAQPEASEPFDPPSHDG.

The protein belongs to the XseB family. Heterooligomer composed of large and small subunits.

The protein localises to the cytoplasm. It catalyses the reaction Exonucleolytic cleavage in either 5'- to 3'- or 3'- to 5'-direction to yield nucleoside 5'-phosphates.. Its function is as follows. Bidirectionally degrades single-stranded DNA into large acid-insoluble oligonucleotides, which are then degraded further into small acid-soluble oligonucleotides. This Stenotrophomonas maltophilia (strain K279a) protein is Exodeoxyribonuclease 7 small subunit.